Reading from the N-terminus, the 239-residue chain is MDKFLVRPDLRDLQGGGEEPAPTGGASGDLKSPDWRHLRAEGLSCDYTVLFGKAEADKIFRELEQEVEYFTGALAKVQVFGKWHSVPRKQATYGDAGLTYTFSGLTLTPKPWVPVLERVRDRVCEVTGQTFNFVLVNRYKDGCDHIGEHRDDERELAPGSPIASVSFGACRDFIFRHKDSRGKRPRRTVEVVRLQLAHGSLLMMNPPTNTHWYHSLPIRKRVLAPRVNLTFRKILPTKK.

The PCNA-binding signature appears at 3 to 7 (KFLVR). The disordered stretch occupies residues 11–32 (RDLQGGGEEPAPTGGASGDLKS). Residues 80 to 82 (FGK) and 100 to 102 (YTF) contribute to the substrate site. One can recognise a Fe2OG dioxygenase domain in the interval 130 to 235 (TFNFVLVNRY…RVNLTFRKIL (106 aa)). 2-oxoglutarate contacts are provided by asparagine 137, tyrosine 139, and histidine 149. Histidine 149 and aspartate 151 together coordinate Fe cation. Substrate is bound at residue aspartate 152. Histidine 214, arginine 226, threonine 230, and arginine 232 together coordinate 2-oxoglutarate. Histidine 214 contributes to the Fe cation binding site.

It belongs to the alkB family. As to quaternary structure, interacts with PCNA homotrimer; this interaction is enhanced during the S-phase of the cell cycle. Interacts with nucleolar proteins NCL, UBTF and NPM1. Interacts with XRCC5-XRCC6 heterodimer. Fe(2+) serves as cofactor. As to expression, detected in liver, testis and kidney (at protein level). Detected in heart and testis.

It is found in the nucleus. It localises to the nucleolus. The protein resides in the nucleoplasm. The catalysed reaction is a methylated nucleobase within DNA + 2-oxoglutarate + O2 = a nucleobase within DNA + formaldehyde + succinate + CO2. The enzyme catalyses an N(1)-methyl-2'-deoxyadenosine in double-stranded DNA + 2-oxoglutarate + O2 = a 2'-deoxyadenosine in double-stranded DNA + formaldehyde + succinate + CO2 + H(+). It catalyses the reaction an N(1)-methyl-2'-deoxyadenosine in single-stranded DNA + 2-oxoglutarate + O2 = a 2'-deoxyadenosine in single-stranded DNA + formaldehyde + succinate + CO2 + H(+). It carries out the reaction an N(3)-methyl-2'-deoxycytidine in double-stranded DNA + 2-oxoglutarate + O2 = a 2'-deoxycytidine in double-stranded DNA + formaldehyde + succinate + CO2 + H(+). The catalysed reaction is an N(3)-methyl-2'-deoxycytidine in single-stranded DNA + 2-oxoglutarate + O2 = a 2'-deoxycytidine in single-stranded DNA + formaldehyde + succinate + CO2 + H(+). The enzyme catalyses a 1,N(6)-etheno-2'-deoxyadenosine in double-stranded DNA + 2-oxoglutarate + O2 + H2O = a 2'-deoxyadenosine in double-stranded DNA + glyoxal + succinate + CO2. It catalyses the reaction a 1,N(6)-etheno-2'-deoxyadenosine in single-stranded DNA + 2-oxoglutarate + O2 + H2O = a 2'-deoxyadenosine in single-stranded DNA + glyoxal + succinate + CO2. It carries out the reaction a 3,N(4)-etheno-2'-deoxycytidine in double-stranded DNA + 2-oxoglutarate + O2 + H2O = a 2'-deoxycytidine in double-stranded DNA + glyoxal + succinate + CO2. The catalysed reaction is a 3,N(4)-etheno-2'-deoxycytidine in single-stranded DNA + 2-oxoglutarate + O2 + H2O = a 2'-deoxycytidine in single-stranded DNA + glyoxal + succinate + CO2. The enzyme catalyses a 1,N(2)-etheno-2'-deoxyguanosine in double-stranded DNA + 2-oxoglutarate + O2 + H2O = a 2'-deoxyguanosine in double-stranded DNA + glyoxal + succinate + CO2. Activated by magnesium ions. Dioxygenase that repairs alkylated nucleic acid bases by direct reversal oxidative dealkylation. Can process both double-stranded (ds) and single-stranded (ss) DNA substrates, with a strong preference for dsDNA. Uses molecular oxygen, 2-oxoglutarate and iron as cofactors to oxidize the alkyl groups that are subsequently released as aldehydes, regenerating the undamaged bases. Probes the base pair stability, locates a weakened base pair and flips the damaged base to accommodate the lesion in its active site for efficient catalysis. Repairs monoalkylated bases, specifically N1-methyladenine and N3-methylcytosine, as well as higher order alkyl adducts such as bases modified with exocyclic bridged adducts known as etheno adducts including 1,N6-ethenoadenine, 3,N4-ethenocytosine and 1,N2-ethenoguanine. Acts as a gatekeeper of genomic integrity under alkylation stress. Efficiently repairs alkylated lesions in ribosomal DNA (rDNA). These lesions can cause ss- and dsDNA strand breaks that severely impair rDNA transcription. In a response mechanism to DNA damage, associates with PCNA at replication forks to repair alkylated adducts prior to replication. In Mus musculus (Mouse), this protein is DNA oxidative demethylase ALKBH2 (Alkbh2).